Here is a 129-residue protein sequence, read N- to C-terminus: Gem-associated protein 7 (129 aa).

M1 carries the N-acetylmethionine modification. An SUZ-C domain is found at 1–31 (MQSPLTIPVPVPVLRLPRGPDGFSRGFASDG). A Sm domain is found at 63–129 (RYLRSLLAMV…SDIISYSFKL (67 aa)).

Belongs to the gemin-7 family. Part of the core SMN complex that contains SMN1, GEMIN2/SIP1, DDX20/GEMIN3, GEMIN4, GEMIN5, GEMIN6, GEMIN7, GEMIN8 and STRAP/UNRIP. Part of the SMN-Sm complex that contains SMN1, GEMIN2/SIP1, DDX20/GEMIN3, GEMIN4, GEMIN5, GEMIN6, GEMIN7, GEMIN8, STRAP/UNRIP and the Sm proteins SNRPB, SNRPD1, SNRPD2, SNRPD3, SNRPE, SNRPF and SNRPG. Interacts with GEMIN6; the interaction is direct. Interacts with STRAP/UNRIP; the interaction is direct. Interacts with GEMIN8; the interaction is direct. Interacts with SNRPB, SNRPD2, SNRPD3 and SNRPE; the interaction is direct.

Its subcellular location is the nucleus. The protein resides in the nucleoplasm. It is found in the gem. It localises to the cytoplasm. Its function is as follows. The SMN complex catalyzes the assembly of small nuclear ribonucleoproteins (snRNPs), the building blocks of the spliceosome, and thereby plays an important role in the splicing of cellular pre-mRNAs. Most spliceosomal snRNPs contain a common set of Sm proteins SNRPB, SNRPD1, SNRPD2, SNRPD3, SNRPE, SNRPF and SNRPG that assemble in a heptameric protein ring on the Sm site of the small nuclear RNA to form the core snRNP (Sm core). In the cytosol, the Sm proteins SNRPD1, SNRPD2, SNRPE, SNRPF and SNRPG are trapped in an inactive 6S pICln-Sm complex by the chaperone CLNS1A that controls the assembly of the core snRNP. To assemble core snRNPs, the SMN complex accepts the trapped 5Sm proteins from CLNS1A forming an intermediate. Binding of snRNA inside 5Sm triggers eviction of the SMN complex, thereby allowing binding of SNRPD3 and SNRPB to complete assembly of the core snRNP. The chain is Gem-associated protein 7 (Gemin7) from Mus musculus (Mouse).